We begin with the raw amino-acid sequence, 182 residues long: Histone deacetylase complex subunit SAP30L (182 aa).

Met1 bears the N-acetylmethionine mark. The segment covering 1 to 10 has biased composition (acidic residues); that stretch reads MNGFSTEEDS. Residues 1–22 form a disordered region; that stretch reads MNGFSTEEDSREGPPAAPAAAP. Cystine bridges form between Cys28-Cys29 and Cys37-Cys73. The Atypical zinc finger occupies 28-76; sequence CCLIADGERCVRPAGNASFSKRVQKSISQKKLKLDIDKSVRHLYICDFH. Lys48 participates in a covalent cross-link: Glycyl lysine isopeptide (Lys-Gly) (interchain with G-Cter in SUMO2). Residues 84–103 are disordered; it reads RNKRKRKASDDGGDSPEHDA. Residues 85-90 carry the Nuclear localization signal (NLS) motif; that stretch reads NKRKRK. Residues 87–89 are important for DNA and phosphoinositide binding; it reads RKR. Phosphoserine occurs at positions 92 and 98. Glycyl lysine isopeptide (Lys-Gly) (interchain with G-Cter in SUMO2) cross-links involve residues Lys154, Lys165, and Lys174.

This sequence belongs to the SAP30 family. As to quaternary structure, interacts with components of the histone deacetylase complex SIN3A, HDAC1 and HDAC2. Binds histones and nucleosomes. Interacts with FEZ1.

It is found in the nucleus. It localises to the nucleolus. Functionally, functions as a transcription repressor, probably via its interaction with histone deacetylase complexes. Involved in the functional recruitment of the class 1 Sin3-histone deacetylase complex (HDAC) to the nucleolus. Binds DNA, apparently without sequence-specificity, and bends bound double-stranded DNA. Binds phosphoinositol phosphates (phosphoinositol 3-phosphate, phosphoinositol 4-phosphate and phosphoinositol 5-phosphate) via the same basic sequence motif that mediates DNA binding and nuclear import. This is Histone deacetylase complex subunit SAP30L (Sap30l) from Mus musculus (Mouse).